A 912-amino-acid chain; its full sequence is Alpha-actinin-4 (912 aa).

The actin-binding stretch occupies residues M1–H267. The segment at Q12–G27 is interaction with VCL. Residues Q12–D31 form a disordered region. Over residues N16–M29 the composition is skewed to gly residues. A Phosphotyrosine modification is found at Y32. An interaction with VCL region spans residues R41–N62. 2 Calponin-homology (CH) domains span residues K51 to A155 and T164 to S270. The LXXLL motif motif lies at L85–L89. An interaction with VCL region spans residues K109 to L127. K115 bears the N6-acetyllysine mark. Residues T178–W193 form a polyphosphoinositide (PIP2)-binding region. The residue at position 215 (K215) is an N6-acetyllysine. Position 250 is a phosphothreonine (T250). 4 Spectrin repeats span residues H294 to N404, H414 to K519, Q529 to E640, and H650 to N753. N6-acetyllysine occurs at positions 593 and 626. S697 is subject to Phosphoserine. The interval W737–L912 is mediates interaction with MICALL2. EF-hand domains lie at E766–D801 and Q807–D842. Residue D779 participates in Ca(2+) binding. K780 carries the post-translational modification N6-acetyllysine. Ca(2+) contacts are provided by D781 and E790. K860 is subject to N6-acetyllysine. A Phosphoserine modification is found at S910.

This sequence belongs to the alpha-actinin family. As to quaternary structure, homodimer; antiparallel. Interacts with MAGI1. Interacts with PDLIM2. Identified in a complex with CASK, IQGAP1, MAGI2, NPHS1, SPTAN1 and SPTBN1. Identified in a IGF2BP1-dependent mRNP granule complex containing untranslated mRNAs. Component of the CART complex, at least composed of ACTN4, HGS/HRS, MYO5B and TRIM3. Binds TRIM3 at the N-terminus. Interacts with MICALL2 (preferentially in opened conformation); stimulated by RAB13 activation. Interacts with PPARG and RARA. Binds to VCL; this interaction triggers VCL conformational changes. Interacts with SEPTIN14. Interacts with IGSF8.

The protein resides in the nucleus. It is found in the cytoplasm. The protein localises to the cell junction. Its subcellular location is the cytoskeleton. It localises to the stress fiber. The protein resides in the perinuclear region. Functionally, F-actin cross-linking protein which is thought to anchor actin to a variety of intracellular structures. This is a bundling protein. Probably involved in vesicular trafficking via its association with the CART complex. The CART complex is necessary for efficient transferrin receptor recycling but not for EGFR degradation. Involved in tight junction assembly in epithelial cells probably through interaction with MICALL2. Links MICALL2 to the actin cytoskeleton and recruits it to the tight junctions. May also function as a transcriptional coactivator, stimulating transcription mediated by the nuclear hormone receptors PPARG and RARA. Association with IGSF8 regulates the immune synapse formation and is required for efficient T-cell activation. This is Alpha-actinin-4 from Mus musculus (Mouse).